Here is a 101-residue protein sequence, read N- to C-terminus: Urease subunit beta (101 aa).

It belongs to the urease beta subunit family. Heterotrimer of UreA (gamma), UreB (beta) and UreC (alpha) subunits. Three heterotrimers associate to form the active enzyme.

The protein localises to the cytoplasm. It carries out the reaction urea + 2 H2O + H(+) = hydrogencarbonate + 2 NH4(+). It functions in the pathway nitrogen metabolism; urea degradation; CO(2) and NH(3) from urea (urease route): step 1/1. The sequence is that of Urease subunit beta from Acaryochloris marina (strain MBIC 11017).